The following is a 1033-amino-acid chain: Isoleucine--tRNA ligase 2 (1033 aa).

The 'HIGH' region signature appears at 47–57; that stretch reads PTANGLPHVGH. Positions 590–594 match the 'KMSKS' region motif; it reads KMSKS. Lys-593 is an ATP binding site.

It belongs to the class-I aminoacyl-tRNA synthetase family. IleS type 2 subfamily. As to quaternary structure, monomer. Zn(2+) serves as cofactor.

It localises to the cytoplasm. The catalysed reaction is tRNA(Ile) + L-isoleucine + ATP = L-isoleucyl-tRNA(Ile) + AMP + diphosphate. Functionally, catalyzes the attachment of isoleucine to tRNA(Ile). As IleRS can inadvertently accommodate and process structurally similar amino acids such as valine, to avoid such errors it has two additional distinct tRNA(Ile)-dependent editing activities. One activity is designated as 'pretransfer' editing and involves the hydrolysis of activated Val-AMP. The other activity is designated 'posttransfer' editing and involves deacylation of mischarged Val-tRNA(Ile). This chain is Isoleucine--tRNA ligase 2, found in Bacillus thuringiensis subsp. konkukian (strain 97-27).